The sequence spans 422 residues: Ferrochelatase, mitochondrial (422 aa).

The N-terminal 53 residues, 1 to 53 (MLSASANMAAALRAAGALLREPLVHGSSRACQPWRCQSGAAVAATTEKVHHAK), are a transit peptide targeting the mitochondrion. Lys-56 is modified (N6-acetyllysine). Protoporphyrin IX contacts are provided by Arg-114, Tyr-122, and Ser-129. Lys-137 is modified (N6-succinyllysine). Cys-195 contributes to the [2Fe-2S] cluster binding site. The active site involves His-229. N6-acetyllysine; alternate is present on Lys-289. Lys-289 is modified (N6-succinyllysine; alternate). Residue Asp-382 is part of the active site. Cys-402, Cys-405, and Cys-410 together coordinate [2Fe-2S] cluster. N6-acetyllysine; alternate is present on Lys-414. At Lys-414 the chain carries N6-succinyllysine; alternate.

It belongs to the ferrochelatase family. As to quaternary structure, homodimer. Homotetramer. Interaction with PGRMC1; the interaction results in decreased FECH activity. Interacts with ABCB10 and SLC25A37; this interaction forms an oligomeric complex. Forms a complex with ABCB7 and ABCB10, where a dimeric FECH bridges ABCB7 and ABCB10 homodimers; this complex may be required for cellular iron homeostasis, mitochondrial function and heme biosynthesis. Interacts with ABCB7 and ABCB10. Requires [2Fe-2S] cluster as cofactor. Erythroid and hepatic cells.

It localises to the mitochondrion inner membrane. The enzyme catalyses heme b + 2 H(+) = protoporphyrin IX + Fe(2+). It functions in the pathway porphyrin-containing compound metabolism; protoheme biosynthesis; protoheme from protoporphyrin-IX: step 1/1. Functionally, catalyzes the ferrous insertion into protoporphyrin IX. This Mus musculus (Mouse) protein is Ferrochelatase, mitochondrial.